We begin with the raw amino-acid sequence, 235 residues long: Putative 4'-phosphopantetheinyl transferase HI_0152 (235 aa).

Mg(2+)-binding residues include aspartate 112, glutamate 114, and glutamate 155.

It belongs to the P-Pant transferase superfamily. Gsp/Sfp/HetI/AcpT family. Mg(2+) serves as cofactor.

Functionally, may transfer the 4'-phosphopantetheine moiety from coenzyme A (CoA) to a serine residue of a carrier protein domain. The sequence is that of Putative 4'-phosphopantetheinyl transferase HI_0152 from Haemophilus influenzae (strain ATCC 51907 / DSM 11121 / KW20 / Rd).